We begin with the raw amino-acid sequence, 142 residues long: MRNFDLSPLMRQWIGFDKLANALQNAGESQSFPPYNIEKSDDNHYRITLALAGFRQEDLEIQLEGTRLSVKGTPEQPKEEKKWLHQGLMNQPFSLSFTLAENMEVSGATFVNGLLHIDLIRNEPEPIAAQRIAISERPALNS.

The region spanning 26 to 137 is the sHSP domain; the sequence is AGESQSFPPY…AAQRIAISER (112 aa).

It belongs to the small heat shock protein (HSP20) family. As to quaternary structure, homodimer. Forms homomultimers of about 100-150 subunits at optimal growth temperatures. Conformation changes to oligomers at high temperatures or high ionic concentrations. The decrease in size of the multimers is accompanied by an increase in chaperone activity.

It is found in the cytoplasm. Its function is as follows. Associates with aggregated proteins, together with IbpA, to stabilize and protect them from irreversible denaturation and extensive proteolysis during heat shock and oxidative stress. Aggregated proteins bound to the IbpAB complex are more efficiently refolded and reactivated by the ATP-dependent chaperone systems ClpB and DnaK/DnaJ/GrpE. Its activity is ATP-independent. In Shigella flexneri serotype 5b (strain 8401), this protein is Small heat shock protein IbpB.